Here is a 311-residue protein sequence, read N- to C-terminus: tRNA-cytidine(32) 2-sulfurtransferase (311 aa).

Positions 47–52 (SGGKDS) match the PP-loop motif motif. 3 residues coordinate [4Fe-4S] cluster: Cys122, Cys125, and Cys213.

Belongs to the TtcA family. In terms of assembly, homodimer. Mg(2+) is required as a cofactor. It depends on [4Fe-4S] cluster as a cofactor.

Its subcellular location is the cytoplasm. It carries out the reaction cytidine(32) in tRNA + S-sulfanyl-L-cysteinyl-[cysteine desulfurase] + AH2 + ATP = 2-thiocytidine(32) in tRNA + L-cysteinyl-[cysteine desulfurase] + A + AMP + diphosphate + H(+). Its pathway is tRNA modification. Catalyzes the ATP-dependent 2-thiolation of cytidine in position 32 of tRNA, to form 2-thiocytidine (s(2)C32). The sulfur atoms are provided by the cysteine/cysteine desulfurase (IscS) system. The chain is tRNA-cytidine(32) 2-sulfurtransferase from Shigella flexneri serotype 5b (strain 8401).